The primary structure comprises 131 residues: Lactose permease (131 aa).

The Cytoplasmic portion of the chain corresponds to 1 to 13; the sequence is MKFSELAPRERHN. Residues 14–34 traverse the membrane as a helical segment; it reads FVYFLLFFFFYHFIMSAYFPF. The Periplasmic segment spans residues 35–50; that stretch reads FPVWLADVNHLTKTET. A helical membrane pass occupies residues 51–71; the sequence is GIVFSSISLFAIIFQPVFGLM. At 72 to 80 the chain is on the cytoplasmic side; it reads SDKLGLRKH. The helical transmembrane segment at 81 to 101 threads the bilayer; it reads LLWTITVLLILFAPFFIFVFS. Residue Pro-102 is a topological domain, periplasmic. The chain crosses the membrane as a helical span at residues 103–123; it reads LLQMNIIAGSLVGGIYLGIVF. Residues 124–131 lie on the Cytoplasmic side of the membrane; it reads STAPGVGS.

This sequence belongs to the major facilitator superfamily. Oligosaccharide:H(+) symporter (OHS) (TC 2.A.1.5) family.

It localises to the cell inner membrane. It catalyses the reaction lactose(in) + H(+)(in) = lactose(out) + H(+)(out). Its function is as follows. Responsible for transport of beta-galactosides into the cell, with the concomitant import of a proton (symport system). In Klebsiella pneumoniae, this protein is Lactose permease (lacY).